The primary structure comprises 515 residues: Probable cytosol aminopeptidase (515 aa).

Positions 277 and 282 each coordinate Mn(2+). Residue Lys-289 is part of the active site. 3 residues coordinate Mn(2+): Asp-300, Asp-359, and Glu-361. Arg-363 is an active-site residue.

It belongs to the peptidase M17 family. Mn(2+) serves as cofactor.

It localises to the cytoplasm. It carries out the reaction Release of an N-terminal amino acid, Xaa-|-Yaa-, in which Xaa is preferably Leu, but may be other amino acids including Pro although not Arg or Lys, and Yaa may be Pro. Amino acid amides and methyl esters are also readily hydrolyzed, but rates on arylamides are exceedingly low.. It catalyses the reaction Release of an N-terminal amino acid, preferentially leucine, but not glutamic or aspartic acids.. In terms of biological role, presumably involved in the processing and regular turnover of intracellular proteins. Catalyzes the removal of unsubstituted N-terminal amino acids from various peptides. In Streptomyces griseus subsp. griseus (strain JCM 4626 / CBS 651.72 / NBRC 13350 / KCC S-0626 / ISP 5235), this protein is Probable cytosol aminopeptidase.